Here is a 336-residue protein sequence, read N- to C-terminus: Phenylalanine--tRNA ligase alpha subunit (336 aa).

Position 259 (Glu259) interacts with Mg(2+).

This sequence belongs to the class-II aminoacyl-tRNA synthetase family. Phe-tRNA synthetase alpha subunit type 1 subfamily. In terms of assembly, tetramer of two alpha and two beta subunits. Mg(2+) serves as cofactor.

It localises to the cytoplasm. It carries out the reaction tRNA(Phe) + L-phenylalanine + ATP = L-phenylalanyl-tRNA(Phe) + AMP + diphosphate + H(+). This is Phenylalanine--tRNA ligase alpha subunit from Tropheryma whipplei (strain TW08/27) (Whipple's bacillus).